The sequence spans 374 residues: Cobalt-precorrin-5B C(1)-methyltransferase (374 aa).

This sequence belongs to the CbiD family.

The catalysed reaction is Co-precorrin-5B + S-adenosyl-L-methionine = Co-precorrin-6A + S-adenosyl-L-homocysteine. Its pathway is cofactor biosynthesis; adenosylcobalamin biosynthesis; cob(II)yrinate a,c-diamide from sirohydrochlorin (anaerobic route): step 6/10. In terms of biological role, catalyzes the methylation of C-1 in cobalt-precorrin-5B to form cobalt-precorrin-6A. This is Cobalt-precorrin-5B C(1)-methyltransferase from Synechococcus elongatus (strain ATCC 33912 / PCC 7942 / FACHB-805) (Anacystis nidulans R2).